The following is a 340-amino-acid chain: Deubiquitinase SseL (340 aa).

Histidine 223 is a catalytic residue. Cysteine 285 functions as the Nucleophile in the catalytic mechanism.

The protein belongs to the peptidase C79 family.

It localises to the secreted. The protein resides in the host cytoplasm. Effector proteins function to alter host cell physiology and promote bacterial survival in host tissues. This protease targets the host cell ubiquitin pathway by acting as a deubiquitinase in infected host cells. Specifically hydrolyzes mono- and polyubiquitin substrates in vitro with a preference for 'Lys-63'-linked ubiquitin chains, suggesting that it interferes with a signaling pathway rather than inhibiting proteasomal-dependent degradation of its targets. Does not possess desumoylating activity. Is required for the Salmonella-induced delayed cytotoxicity in macrophages and full virulence. Is not required for intracellular bacterial replication. The sequence is that of Deubiquitinase SseL (sseL) from Salmonella typhimurium (strain LT2 / SGSC1412 / ATCC 700720).